We begin with the raw amino-acid sequence, 66 residues long: Small vasohibin-binding protein (66 aa).

The segment covering 1–23 (MDPPARKEKSKVKEPAFRVEKAK) has biased composition (basic and acidic residues). The disordered stretch occupies residues 1–30 (MDPPARKEKSKVKEPAFRVEKAKQKSAQQE). Residues 5-52 (ARKEKSKVKEPAFRVEKAKQKSAQQELKQRQRAEIYALNRVMTELEQQ) adopt a coiled-coil conformation.

Belongs to the SVBP family. As to quaternary structure, interacts with VASH1 and VASH2. Highly expressed in bone marrow, spleen and testis.

It localises to the cytoplasm. The protein resides in the secreted. It is found in the cytoskeleton. Its function is as follows. Enhances the tyrosine carboxypeptidase activity of VASH1 and VASH2, thereby promoting the removal of the C-terminal tyrosine residue of alpha-tubulin. Also required to enhance the solubility and secretion of VASH1 and VASH2. Plays a role in axon and excitatory synapse formation. The chain is Small vasohibin-binding protein from Mus musculus (Mouse).